The following is a 679-amino-acid chain: Stress-70 protein, mitochondrial (679 aa).

The transit peptide at 1 to 46 (MISASRAAVSRFVGTAASRGPTAARHQDGWNGLSHEAFRIVSRRDY) directs the protein to the mitochondrion. Residues 1–432 (MISASRAAVS…IQGGVLAGDV (432 aa)) form an interaction with NFS1 region. Residues T63 and N64 each coordinate ADP. Residues 63-431 (TNSCVAVMEG…AIQGGVLAGD (369 aa)) form a nucleotide-binding domain (NBD) region. K76 carries the N6-acetyllysine modification. Position 87 is a phosphothreonine (T87). An N6-acetyllysine; alternate mark is found at K135 and K138. N6-succinyllysine; alternate occurs at positions 135 and 138. Position 143 is an N6-acetyllysine (K143). K206 is modified (N6-acetyllysine; alternate). K206 is subject to N6-succinyllysine; alternate. K206 carries the N6-malonyllysine; alternate modification. An N6-acetyllysine mark is found at K234 and K288. N6-acetyllysine; alternate is present on K300. N6-succinyllysine; alternate is present on K300. ADP contacts are provided by E313, K316, and S320. At K368 the chain carries N6-succinyllysine. 2 residues coordinate ADP: G388 and R391. An N6-succinyllysine modification is found at K394. A Phosphoserine modification is found at S408. The interval 432–441 (VTDVLLLDVT) is interdomain linker. Residues 432 to 679 (VTDVLLLDVT…QKDNQKEEKQ (248 aa)) are interaction with FXN and ISCU. The tract at residues 442–679 (PLSLGIETLG…QKDNQKEEKQ (238 aa)) is substrate-binding domain (SBD). Position 513 is an omega-N-methylarginine (R513). An N6-acetyllysine; alternate mark is found at K567 and K600. Residues K567 and K600 each carry the N6-succinyllysine; alternate modification. K610 carries the post-translational modification N6-succinyllysine. K612 is subject to N6-acetyllysine. K646 carries the N6-acetyllysine; alternate modification. K646 is modified (N6-succinyllysine; alternate). The interval 656 to 679 (ASEREGSGSSGTGEQKDNQKEEKQ) is disordered. The segment covering 669–679 (EQKDNQKEEKQ) has biased composition (basic and acidic residues).

This sequence belongs to the heat shock protein 70 family. As to quaternary structure, interacts strongly with the intermediate form of FXN and weakly with its mature form. Interacts with HSCB. Associates with the mitochondrial contact site and cristae organizing system (MICOS) complex, composed of at least MICOS10/MIC10, CHCHD3/MIC19, CHCHD6/MIC25, APOOL/MIC27, IMMT/MIC60, APOO/MIC23/MIC26 and QIL1/MIC13. This complex was also known under the names MINOS or MitOS complex. The MICOS complex associates with mitochondrial outer membrane proteins SAMM50, MTX1, MTX2 and DNAJC11, mitochondrial inner membrane protein TMEM11 and with HSPA9. Interacts with DNLZ, the interaction is required to prevent self-aggregation. Interacts with TESPA1. Interacts with PDPN. Interacts with NFU1, NFS1 and ISCU. Interacts with TP53; the interaction promotes TP53 degradation. Interacts (via SBD domain) with UBXN2A; the interaction with UBXN2A inhibits HSPA9/MOT-2 interaction with and degradation of TP53, thereby promotes TP53 translocation to the nucleus. Interacts with ITPR1 AND VDAC1; this interaction couples ITPR1 to VDAC1. Component of the TIM23 mitochondrial inner membrane pre-sequence translocase complex.

Its subcellular location is the mitochondrion. It localises to the nucleus. The protein localises to the nucleolus. It is found in the cytoplasm. The protein resides in the mitochondrion matrix. It carries out the reaction ATP + H2O = ADP + phosphate + H(+). The chaperone activity is regulated by ATP-induced allosteric coupling of the nucleotide-binding (NBD) and substrate-binding (SBD) domains. ATP binding in the NBD leads to a conformational change in the NBD, which is transferred through the interdomain linker (IDL) to the substrate-binding domain (SBD). This elicits a reduced substrate affinity and a faster substrate exchange rate. Upon hydrolysis of ATP to ADP, the protein undergoes a conformational change that increases its affinity for substrate proteins. It cycles through repeated phases of ATP hydrolysis and nucleotide exchange, facilitating repeated cycles of substrate binding and release. Functions in collaboration with co-chaperones. Functions with the co-chaperone, DNLZ, to maintain solubility and regulate ATP hydrolysis. Nucleotide exchange factors, GRPEL1 and GRPEL2, accelerate nucleotide exchange. Mitochondrial chaperone that plays a key role in mitochondrial protein import, folding, and assembly. Plays an essential role in the protein quality control system, the correct folding of proteins, the re-folding of misfolded proteins, and the targeting of proteins for subsequent degradation. These processes are achieved through cycles of ATP binding, ATP hydrolysis, and ADP release, mediated by co-chaperones. In mitochondria, it associates with the TIM (translocase of the inner membrane) protein complex to assist in the import and folding of mitochondrial proteins. Plays an important role in mitochondrial iron-sulfur cluster (ISC) biogenesis, interacts with and stabilizes ISC cluster assembly proteins FXN, NFU1, NFS1 and ISCU. Regulates erythropoiesis via stabilization of ISC assembly. Regulates mitochondrial calcium-dependent apoptosis by coupling two calcium channels, ITPR1 and VDAC1, at the mitochondria-associated endoplasmic reticulum (ER) membrane to facilitate calcium transport from the ER lumen to the mitochondria intermembrane space, providing calcium for the downstream calcium channel MCU, which releases it into the mitochondrial matrix. Although primarily located in the mitochondria, it is also found in other cellular compartments. In the cytosol, it associates with proteins involved in signaling, apoptosis, or senescence. It may play a role in cell cycle regulation via its interaction with and promotion of degradation of TP53. May play a role in the control of cell proliferation and cellular aging. Protects against reactive oxygen species (ROS). Extracellular HSPA9 plays a cytoprotective role by preventing cell lysis following immune attack by the membrane attack complex by disrupting formation of the complex. The chain is Stress-70 protein, mitochondrial from Bos taurus (Bovine).